Reading from the N-terminus, the 99-residue chain is Class II hydrophobin 2 (99 aa).

An N-terminal signal peptide occupies residues 1-15 (MKFFVVAALFAGALA). 2 cysteine pairs are disulfide-bonded: Cys-30/Cys-79 and Cys-40/Cys-70.

This sequence belongs to the cerato-ulmin hydrophobin family. Homotetramer. Further self-assembles to form highly ordered films at water-air interfaces through intermolecular interactions.

The protein localises to the secreted. Its subcellular location is the cell wall. Its function is as follows. Aerial growth, conidiation, and dispersal of filamentous fungi in the environment rely upon a capability of their secreting small amphipathic proteins called hydrophobins (HPBs) with low sequence identity. Class I can self-assemble into an outermost layer of rodlet bundles on aerial cell surfaces, conferring cellular hydrophobicity that supports fungal growth, development and dispersal; whereas Class II form highly ordered films at water-air interfaces through intermolecular interactions but contribute nothing to the rodlet structure. HYD2 is a class II hydrophobin that contributes to the fruiting body development. This Cordyceps militaris (Caterpillar fungus) protein is Class II hydrophobin 2.